The chain runs to 263 residues: Chromosomal replication initiator protein DnaA (263 aa).

Position 1 (D1) is a region of interest, domain I, interacts with DnaA modulators. A region of interest (domain II) is located at residue D1. The segment at 1 to 177 (DSGLGKTHLL…GIINKIEFSI (177 aa)) is domain III, AAA+ region. ATP-binding residues include G3, G5, K6, and T7. Residues 178–263 (IQDNSAAPKI…KNYSEIGVAF (86 aa)) form a domain IV, binds dsDNA region.

It belongs to the DnaA family. As to quaternary structure, oligomerizes as a right-handed, spiral filament on DNA at oriC.

It is found in the cytoplasm. In terms of biological role, plays an essential role in the initiation and regulation of chromosomal replication. ATP-DnaA binds to the origin of replication (oriC) to initiate formation of the DNA replication initiation complex once per cell cycle. Binds the DnaA box (a 9 base pair repeat at the origin) and separates the double-stranded (ds)DNA. Forms a right-handed helical filament on oriC DNA; dsDNA binds to the exterior of the filament while single-stranded (ss)DNA is stabiized in the filament's interior. The ATP-DnaA-oriC complex binds and stabilizes one strand of the AT-rich DNA unwinding element (DUE), permitting loading of DNA polymerase. After initiation quickly degrades to an ADP-DnaA complex that is not apt for DNA replication. Binds acidic phospholipids. The sequence is that of Chromosomal replication initiator protein DnaA from Spiroplasma apis.